Reading from the N-terminus, the 207-residue chain is Ribosomal RNA large subunit methyltransferase E (207 aa).

Positions 61, 63, 81, 97, and 122 each coordinate S-adenosyl-L-methionine. K162 acts as the Proton acceptor in catalysis.

Belongs to the class I-like SAM-binding methyltransferase superfamily. RNA methyltransferase RlmE family.

The protein resides in the cytoplasm. The catalysed reaction is uridine(2552) in 23S rRNA + S-adenosyl-L-methionine = 2'-O-methyluridine(2552) in 23S rRNA + S-adenosyl-L-homocysteine + H(+). In terms of biological role, specifically methylates the uridine in position 2552 of 23S rRNA at the 2'-O position of the ribose in the fully assembled 50S ribosomal subunit. This chain is Ribosomal RNA large subunit methyltransferase E, found in Pseudomonas putida (strain ATCC 700007 / DSM 6899 / JCM 31910 / BCRC 17059 / LMG 24140 / F1).